We begin with the raw amino-acid sequence, 210 residues long: ATP-dependent Clp protease proteolytic subunit (210 aa).

Ser-107 acts as the Nucleophile in catalysis. His-132 is an active-site residue.

It belongs to the peptidase S14 family. In terms of assembly, fourteen ClpP subunits assemble into 2 heptameric rings which stack back to back to give a disk-like structure with a central cavity, resembling the structure of eukaryotic proteasomes.

The protein resides in the cytoplasm. The catalysed reaction is Hydrolysis of proteins to small peptides in the presence of ATP and magnesium. alpha-casein is the usual test substrate. In the absence of ATP, only oligopeptides shorter than five residues are hydrolyzed (such as succinyl-Leu-Tyr-|-NHMec, and Leu-Tyr-Leu-|-Tyr-Trp, in which cleavage of the -Tyr-|-Leu- and -Tyr-|-Trp bonds also occurs).. Cleaves peptides in various proteins in a process that requires ATP hydrolysis. Has a chymotrypsin-like activity. Plays a major role in the degradation of misfolded proteins. The protein is ATP-dependent Clp protease proteolytic subunit of Cereibacter sphaeroides (strain ATCC 17029 / ATH 2.4.9) (Rhodobacter sphaeroides).